The following is a 297-amino-acid chain: Phosphoribosylaminoimidazole-succinocarboxamide synthase (297 aa).

It belongs to the SAICAR synthetase family.

It catalyses the reaction 5-amino-1-(5-phospho-D-ribosyl)imidazole-4-carboxylate + L-aspartate + ATP = (2S)-2-[5-amino-1-(5-phospho-beta-D-ribosyl)imidazole-4-carboxamido]succinate + ADP + phosphate + 2 H(+). The protein operates within purine metabolism; IMP biosynthesis via de novo pathway; 5-amino-1-(5-phospho-D-ribosyl)imidazole-4-carboxamide from 5-amino-1-(5-phospho-D-ribosyl)imidazole-4-carboxylate: step 1/2. This is Phosphoribosylaminoimidazole-succinocarboxamide synthase from Mycobacterium tuberculosis (strain ATCC 25177 / H37Ra).